The sequence spans 238 residues: Small ribosomal subunit protein eS4 (238 aa).

Positions 38-100 (LPLAIVIRDV…TGEVYRVVPD (63 aa)) constitute an S4 RNA-binding domain.

It belongs to the eukaryotic ribosomal protein eS4 family.

The sequence is that of Small ribosomal subunit protein eS4 from Pyrobaculum arsenaticum (strain DSM 13514 / JCM 11321 / PZ6).